Here is a 372-residue protein sequence, read N- to C-terminus: Mannan endo-1,4-beta-mannosidase 8 (372 aa).

Positions 57 and 172 each coordinate substrate. The Proton donor role is filled by glutamate 173. Tyrosine 253 is a substrate binding site. Catalysis depends on glutamate 293, which acts as the Nucleophile. Tryptophan 335 contributes to the substrate binding site.

This sequence belongs to the glycosyl hydrolase 5 (cellulase A) family. In terms of tissue distribution, expressed in stems and leaves and seeds.

It catalyses the reaction Random hydrolysis of (1-&gt;4)-beta-D-mannosidic linkages in mannans, galactomannans and glucomannans.. This Oryza sativa subsp. japonica (Rice) protein is Mannan endo-1,4-beta-mannosidase 8 (MAN8).